The primary structure comprises 580 residues: Myb-like protein C (580 aa).

Disordered stretches follow at residues 1–58 (MTMI…YGSN), 73–101 (QYSISSPSPKKRPFNSTMTTSPPTPTLLS), 121–203 (NVYN…SSTN), and 354–380 (SDNDSNQKKKRERIRKSVSRGLRNPPN). Composition is skewed to low complexity over residues 20–47 (NNNNNNSNNSSNNNSNNNSNNNNNNNNN), 87–101 (NSTMTTSPPTPTLLS), and 126–203 (PHQS…SSTN). Over residues 361–371 (KKKRERIRKSV) the composition is skewed to basic residues. HTH myb-type domains follow at residues 368-430 (RKSV…CPAI) and 431-482 (RKGS…SREV). 2 consecutive DNA-binding regions (H-T-H motif) follow at residues 402-426 (WKKIAHQIGGGKTGAQCAQHWKRVL) and 454-478 (WKNVASEIRTRTDIQCRYQYFKSCM). In terms of domain architecture, Myb-like spans 484–546 (WSSREDEILQ…ECKTRYFQLN (63 aa)).

It is found in the nucleus. Transcription activator required for the culmination, at the time of the fruiting body formation. Regulates genes involved in the cell differentiation within the fruiting body. This is Myb-like protein C (mybC) from Dictyostelium discoideum (Social amoeba).